We begin with the raw amino-acid sequence, 434 residues long: MKPSKHLIFALFALAISQPTMAAPQPIDRVAVQINDGIVLESEITNMIDTVKANARAANQSLPSDSALRTQVIERLILTRLQLQMADRIGLHIGDLQLDQAIENIAREQKMTVAQMQQKIESEGLSFGQYREQLREEITLGEIQRIQVQRRIQVSPQEITGLVKLIQEQGMKDVEYQIGHILIDVPNNPNSEQLEASSKRANAVLERLKSGEDFRRTAIASSSGPKALEGGIWDYMNINEMPTLFAEVINGAKKGDIIGPIKSGAGFHIIKIMDARGLQTKEIEEVRARHILLKPSPILSEDRAKAMLEQFLKQIRSGEAKFEDLARQYSEDPGSAAKGGELGWAEPSIYVPEFAQTLNSLSQDQISEPFRTTHGWHITQLEERRKTDATDQFNTNRAHQLIFRRKFNEELQNWLDEMRADAYIEVFQPESNRG.

The first 22 residues, 1-22 (MKPSKHLIFALFALAISQPTMA), serve as a signal peptide directing secretion. PpiC domains follow at residues 173-274 (DVEY…KIMD) and 283-383 (IEEV…QLEE).

The protein resides in the periplasm. The enzyme catalyses [protein]-peptidylproline (omega=180) = [protein]-peptidylproline (omega=0). In terms of biological role, chaperone involved in the correct folding and assembly of outer membrane proteins. Recognizes specific patterns of aromatic residues and the orientation of their side chains, which are found more frequently in integral outer membrane proteins. May act in both early periplasmic and late outer membrane-associated steps of protein maturation. The sequence is that of Chaperone SurA from Shewanella sp. (strain MR-4).